We begin with the raw amino-acid sequence, 368 residues long: Tetraacyldisaccharide 4'-kinase (368 aa).

66 to 73 (TVGGTGKT) contacts ATP.

The protein belongs to the LpxK family.

The enzyme catalyses a lipid A disaccharide + ATP = a lipid IVA + ADP + H(+). Its pathway is glycolipid biosynthesis; lipid IV(A) biosynthesis; lipid IV(A) from (3R)-3-hydroxytetradecanoyl-[acyl-carrier-protein] and UDP-N-acetyl-alpha-D-glucosamine: step 6/6. Functionally, transfers the gamma-phosphate of ATP to the 4'-position of a tetraacyldisaccharide 1-phosphate intermediate (termed DS-1-P) to form tetraacyldisaccharide 1,4'-bis-phosphate (lipid IVA). The sequence is that of Tetraacyldisaccharide 4'-kinase from Desulfatibacillum aliphaticivorans.